An 887-amino-acid polypeptide reads, in one-letter code: Alanine--tRNA ligase (887 aa).

4 residues coordinate Zn(2+): His-581, His-585, Cys-683, and His-687.

It belongs to the class-II aminoacyl-tRNA synthetase family. Zn(2+) serves as cofactor.

The protein resides in the cytoplasm. The catalysed reaction is tRNA(Ala) + L-alanine + ATP = L-alanyl-tRNA(Ala) + AMP + diphosphate. Its function is as follows. Catalyzes the attachment of alanine to tRNA(Ala) in a two-step reaction: alanine is first activated by ATP to form Ala-AMP and then transferred to the acceptor end of tRNA(Ala). Also edits incorrectly charged Ser-tRNA(Ala) and Gly-tRNA(Ala) via its editing domain. This is Alanine--tRNA ligase from Ehrlichia canis (strain Jake).